The primary structure comprises 475 residues: Sulfate adenylyltransferase subunit 1 (475 aa).

The 215-residue stretch at lysine 25–arginine 239 folds into the tr-type G domain. The segment at glycine 34–serine 41 is G1. Glycine 34 to serine 41 serves as a coordination point for GTP. Residues glycine 92–aspartate 96 are G2. The G3 stretch occupies residues aspartate 113–glycine 116. GTP contacts are provided by residues aspartate 113–histidine 117 and asparagine 168–aspartate 171. A G4 region spans residues asparagine 168–aspartate 171. The tract at residues serine 206–leucine 208 is G5.

This sequence belongs to the TRAFAC class translation factor GTPase superfamily. Classic translation factor GTPase family. CysN/NodQ subfamily. In terms of assembly, heterodimer composed of CysD, the smaller subunit, and CysN.

The enzyme catalyses sulfate + ATP + H(+) = adenosine 5'-phosphosulfate + diphosphate. It functions in the pathway sulfur metabolism; hydrogen sulfide biosynthesis; sulfite from sulfate: step 1/3. With CysD forms the ATP sulfurylase (ATPS) that catalyzes the adenylation of sulfate producing adenosine 5'-phosphosulfate (APS) and diphosphate, the first enzymatic step in sulfur assimilation pathway. APS synthesis involves the formation of a high-energy phosphoric-sulfuric acid anhydride bond driven by GTP hydrolysis by CysN coupled to ATP hydrolysis by CysD. The protein is Sulfate adenylyltransferase subunit 1 of Escherichia coli (strain ATCC 8739 / DSM 1576 / NBRC 3972 / NCIMB 8545 / WDCM 00012 / Crooks).